Reading from the N-terminus, the 382-residue chain is GTPase Obg (382 aa).

An Obg domain is found at 2–161 (VKFADESKIR…REIIVELNII (160 aa)). An OBG-type G domain is found at 162–328 (ADIGLVGFPN…VKKAFIRLAD (167 aa)). GTP is bound by residues 168–175 (GFPNAGKS), 193–197 (FTTKI), 215–218 (DIPG), 282–285 (TKLD), and 309–311 (SLY). Residues serine 175 and threonine 195 each coordinate Mg(2+). Residues 360–382 (EEKNDDEHFGATVSLSRKRKPKK) are disordered.

The protein belongs to the TRAFAC class OBG-HflX-like GTPase superfamily. OBG GTPase family. In terms of assembly, monomer. Mg(2+) serves as cofactor.

Its subcellular location is the cytoplasm. Its function is as follows. An essential GTPase which binds GTP, GDP and possibly (p)ppGpp with moderate affinity, with high nucleotide exchange rates and a fairly low GTP hydrolysis rate. Plays a role in control of the cell cycle, stress response, ribosome biogenesis and in those bacteria that undergo differentiation, in morphogenesis control. In Treponema denticola (strain ATCC 35405 / DSM 14222 / CIP 103919 / JCM 8153 / KCTC 15104), this protein is GTPase Obg.